The primary structure comprises 351 residues: MEEAGQDPLDDVRDVMEIPKLEITKQNLDSLNSDLEKDLQRMDEANQVLLKKIQEKEETIQSLERDITLSVRQAREREELDHRTAEKEAALRDLELETAKLEKNKEILSRSVVEVQKEISRKFKNVSLDKEALKQMLAELKVKLQKSTESCASQEKELVKIESDYQSVYQLCEDQAHYIKKYQEILRQMEKEKEMLLLEKEVQRWRSSIQSAKTRPGADCGSDHELLIAKFRLKLKKVGKTTRPFRCKAQNNATQIVKPGSTLVETIQSNMEKTIVKKQKRIFWYRHFRYFIFVVMIFFRLLGYVLFYLQYINPDLLVDALPMVMSRETLTRLRDALFPFLTLEVEEVLPH.

Residues 17–214 (EIPKLEITKQ…WRSSIQSAKT (198 aa)) are a coiled coil. A helical membrane pass occupies residues 292–312 (IFVVMIFFRLLGYVLFYLQYI).

Belongs to the TMCO5 family.

The protein resides in the membrane. The sequence is that of Transmembrane and coiled-coil domain-containing protein 5B (TMCO5B) from Bos taurus (Bovine).